A 69-amino-acid chain; its full sequence is Large ribosomal subunit protein uL29 (69 aa).

The protein belongs to the universal ribosomal protein uL29 family.

The sequence is that of Large ribosomal subunit protein uL29 from Mycoplasmopsis agalactiae (strain NCTC 10123 / CIP 59.7 / PG2) (Mycoplasma agalactiae).